The sequence spans 114 residues: Large ribosomal subunit protein bL19 (114 aa).

This sequence belongs to the bacterial ribosomal protein bL19 family.

In terms of biological role, this protein is located at the 30S-50S ribosomal subunit interface and may play a role in the structure and function of the aminoacyl-tRNA binding site. In Thermobifida fusca (strain YX), this protein is Large ribosomal subunit protein bL19.